Reading from the N-terminus, the 494-residue chain is Protein DETOXIFICATION 22 (494 aa).

Helical transmembrane passes span 40 to 60, 78 to 98, 123 to 143, 159 to 179, 188 to 208, 217 to 237, 268 to 288, 299 to 319, 340 to 360, 384 to 404, 416 to 436, and 441 to 461; these read LWVV…VSLV, ITFT…ASAL, IVLT…GPIL, IALW…CQIF, IIAY…WLLV, GAMT…LLYV, GGMV…TGNL, AICI…LAAV, IVAV…FLFL, LLAF…VAVG, LACY…VVGL, and VWIG…IMTL.

This sequence belongs to the multi antimicrobial extrusion (MATE) (TC 2.A.66.1) family.

The protein resides in the membrane. In Arabidopsis thaliana (Mouse-ear cress), this protein is Protein DETOXIFICATION 22.